The following is a 592-amino-acid chain: Bifunctional purine biosynthesis protein ADE17 (592 aa).

The MGS-like domain occupies Met-1 to Ser-147. IMP is bound by residues Ser-35–Thr-38, Arg-65–Thr-68, Cys-102–Asn-103, and Asp-126–Ile-127. Catalysis depends on Lys-138, which acts as the Proton donor/acceptor; for FAICAR cyclization activity. 5-amino-1-(5-phospho-beta-D-ribosyl)imidazole-4-carboxamide-binding positions include Arg-206 to Tyr-207, His-267, Gly-315, Asp-338, Asn-430, and Arg-450. The active-site Proton acceptor; for AICAR formyltransferase activity is His-267. Residue Ile-451 coordinates (6R)-10-formyltetrahydrofolate. A 5-amino-1-(5-phospho-beta-D-ribosyl)imidazole-4-carboxamide-binding site is contributed by Phe-541. (6R)-10-formyltetrahydrofolate-binding positions include Asp-546 and Ser-565–Val-566. 5-amino-1-(5-phospho-beta-D-ribosyl)imidazole-4-carboxamide is bound at residue Arg-588.

The protein belongs to the PurH family. As to quaternary structure, homodimer.

It localises to the cytoplasm. The protein resides in the cytosol. It carries out the reaction (6R)-10-formyltetrahydrofolate + 5-amino-1-(5-phospho-beta-D-ribosyl)imidazole-4-carboxamide = 5-formamido-1-(5-phospho-D-ribosyl)imidazole-4-carboxamide + (6S)-5,6,7,8-tetrahydrofolate. The catalysed reaction is IMP + H2O = 5-formamido-1-(5-phospho-D-ribosyl)imidazole-4-carboxamide. It functions in the pathway purine metabolism; IMP biosynthesis via de novo pathway; 5-formamido-1-(5-phospho-D-ribosyl)imidazole-4-carboxamide from 5-amino-1-(5-phospho-D-ribosyl)imidazole-4-carboxamide (10-formyl THF route): step 1/1. The protein operates within purine metabolism; IMP biosynthesis via de novo pathway; IMP from 5-formamido-1-(5-phospho-D-ribosyl)imidazole-4-carboxamide: step 1/1. Its function is as follows. Bifunctional enzyme that catalyzes the last two steps of purine biosynthesis. Acts as a transformylase that incorporates a formyl group to the AMP analog AICAR (5-amino-1-(5-phospho-beta-D-ribosyl)imidazole-4-carboxamide) to produce the intermediate formyl-AICAR (FAICAR). Also catalyzes the cyclization of FAICAR to IMP. In Saccharomyces cerevisiae (strain ATCC 204508 / S288c) (Baker's yeast), this protein is Bifunctional purine biosynthesis protein ADE17.